An 87-amino-acid polypeptide reads, in one-letter code: Cytochrome c oxidase assembly factor 4 homolog, mitochondrial (87 aa).

A compositionally biased stretch (polar residues) spans 1-10 (MSTSVPQGHN). A disordered region spans residues 1 to 24 (MSTSVPQGHNWTRPVKKDDDEEDP). The CHCH domain occupies 31–72 (RSGCAASHFAVQECMAQHQDWRQCQPQVQAFRDCMSAQQARR). 2 consecutive short sequence motifs (cx9C motif) follow at residues 34 to 44 (CAASHFAVQEC) and 54 to 64 (CQPQVQAFRDC). 2 disulfide bridges follow: C34–C64 and C44–C54. The segment at 68–87 (QQARRREELQRRKEQASAQH) is disordered. Basic and acidic residues predominate over residues 71 to 87 (RRREELQRRKEQASAQH).

It belongs to the COA4 family.

It is found in the mitochondrion. In terms of biological role, putative COX assembly factor. This is Cytochrome c oxidase assembly factor 4 homolog, mitochondrial (COA4) from Mus musculus (Mouse).